The sequence spans 470 residues: UDP-N-acetylmuramate--L-alanine ligase (470 aa).

114–120 (GTHGKTT) lines the ATP pocket.

It belongs to the MurCDEF family.

The protein localises to the cytoplasm. It catalyses the reaction UDP-N-acetyl-alpha-D-muramate + L-alanine + ATP = UDP-N-acetyl-alpha-D-muramoyl-L-alanine + ADP + phosphate + H(+). It participates in cell wall biogenesis; peptidoglycan biosynthesis. Functionally, cell wall formation. This Xanthobacter autotrophicus (strain ATCC BAA-1158 / Py2) protein is UDP-N-acetylmuramate--L-alanine ligase.